Here is a 158-residue protein sequence, read N- to C-terminus: Large ribosomal subunit protein uL11 (158 aa).

Belongs to the universal ribosomal protein uL11 family. As to quaternary structure, part of the ribosomal stalk of the 50S ribosomal subunit. Interacts with L10 and the large rRNA to form the base of the stalk. L10 forms an elongated spine to which L12 dimers bind in a sequential fashion forming a multimeric L10(L12)X complex.

Forms part of the ribosomal stalk which helps the ribosome interact with GTP-bound translation factors. This chain is Large ribosomal subunit protein uL11, found in Methanospirillum hungatei JF-1 (strain ATCC 27890 / DSM 864 / NBRC 100397 / JF-1).